Consider the following 104-residue polypeptide: NADH-quinone oxidoreductase subunit K (104 aa).

3 consecutive transmembrane segments (helical) span residues 4 to 24 (VPAS…LFGA), 31 to 51 (VIVL…LVAF), and 67 to 87 (LFTM…LIAL).

Belongs to the complex I subunit 4L family. In terms of assembly, NDH-1 is composed of 14 different subunits. Subunits NuoA, H, J, K, L, M, N constitute the membrane sector of the complex.

The protein localises to the cell membrane. It carries out the reaction a quinone + NADH + 5 H(+)(in) = a quinol + NAD(+) + 4 H(+)(out). NDH-1 shuttles electrons from NADH, via FMN and iron-sulfur (Fe-S) centers, to quinones in the respiratory chain. The immediate electron acceptor for the enzyme in this species is believed to be a menaquinone. Couples the redox reaction to proton translocation (for every two electrons transferred, four hydrogen ions are translocated across the cytoplasmic membrane), and thus conserves the redox energy in a proton gradient. This is NADH-quinone oxidoreductase subunit K from Bacillus cereus (strain Q1).